The chain runs to 184 residues: Ethylene-responsive transcription factor ERF122 (184 aa).

The AP2/ERF DNA-binding region spans 120-177 (KYKGVRKKPSGKWAAEIWDPRSKSRRWLGTFLTAEMAAQSYNDAAAEYRARRGKTNGE).

This sequence belongs to the AP2/ERF transcription factor family. ERF subfamily.

It localises to the nucleus. Probably acts as a transcriptional activator. Binds to the GCC-box pathogenesis-related promoter element. May be involved in the regulation of gene expression by stress factors and by components of stress signal transduction pathways. The chain is Ethylene-responsive transcription factor ERF122 (ERF122) from Arabidopsis thaliana (Mouse-ear cress).